Reading from the N-terminus, the 430-residue chain is S-adenosylmethionine synthase (430 aa).

H14 contributes to the ATP binding site. D16 provides a ligand contact to Mg(2+). E42 lines the K(+) pocket. The L-methionine site is built by E55 and Q98. The tract at residues 98-108 is flexible loop; sequence QSADINRGVER. ATP-binding positions include 164–166, 254–255, D263, 269–270, A286, and K290; these read DAK, KF, and RK. D263 is an L-methionine binding site. An L-methionine-binding site is contributed by K294.

Belongs to the AdoMet synthase family. As to quaternary structure, homotetramer; dimer of dimers. Requires Mg(2+) as cofactor. The cofactor is K(+).

It localises to the cytoplasm. The enzyme catalyses L-methionine + ATP + H2O = S-adenosyl-L-methionine + phosphate + diphosphate. Its pathway is amino-acid biosynthesis; S-adenosyl-L-methionine biosynthesis; S-adenosyl-L-methionine from L-methionine: step 1/1. Catalyzes the formation of S-adenosylmethionine (AdoMet) from methionine and ATP. The overall synthetic reaction is composed of two sequential steps, AdoMet formation and the subsequent tripolyphosphate hydrolysis which occurs prior to release of AdoMet from the enzyme. The polypeptide is S-adenosylmethionine synthase (Phocaeicola vulgatus (strain ATCC 8482 / DSM 1447 / JCM 5826 / CCUG 4940 / NBRC 14291 / NCTC 11154) (Bacteroides vulgatus)).